The sequence spans 360 residues: Phosphoserine aminotransferase (360 aa).

Arg-41 is a binding site for L-glutamate. Trp-101, Thr-152, Asp-172, and Gln-195 together coordinate pyridoxal 5'-phosphate. Lys-196 is modified (N6-(pyridoxal phosphate)lysine). 237 to 238 is a pyridoxal 5'-phosphate binding site; it reads NT.

The protein belongs to the class-V pyridoxal-phosphate-dependent aminotransferase family. SerC subfamily. As to quaternary structure, homodimer. Pyridoxal 5'-phosphate serves as cofactor.

It is found in the cytoplasm. It catalyses the reaction O-phospho-L-serine + 2-oxoglutarate = 3-phosphooxypyruvate + L-glutamate. The catalysed reaction is 4-(phosphooxy)-L-threonine + 2-oxoglutarate = (R)-3-hydroxy-2-oxo-4-phosphooxybutanoate + L-glutamate. It participates in amino-acid biosynthesis; L-serine biosynthesis; L-serine from 3-phospho-D-glycerate: step 2/3. The protein operates within cofactor biosynthesis; pyridoxine 5'-phosphate biosynthesis; pyridoxine 5'-phosphate from D-erythrose 4-phosphate: step 3/5. Functionally, catalyzes the reversible conversion of 3-phosphohydroxypyruvate to phosphoserine and of 3-hydroxy-2-oxo-4-phosphonooxybutanoate to phosphohydroxythreonine. This is Phosphoserine aminotransferase from Burkholderia multivorans (strain ATCC 17616 / 249).